A 924-amino-acid chain; its full sequence is DNA repair and recombination protein RDH54 (924 aa).

A compositionally biased stretch (basic and acidic residues) spans 1 to 10; it reads MQIPKYENKP. Disordered regions lie at residues 1-21 and 155-183; these read MQIP…GSNK and EALS…NDGG. The segment covering 168-178 has biased composition (low complexity); sequence TTSTTETVPST. In terms of domain architecture, Helicase ATP-binding spans 299–487; sequence LENDSDISGC…FTIIDFINPG (189 aa). 346 to 353 is an ATP binding site; the sequence is IPLTGLCK. The short motif at 472 to 475 is the DEGH box element; the sequence is NDLN. K615 participates in a covalent cross-link: Glycyl lysine isopeptide (Lys-Gly) (interchain with G-Cter in ubiquitin). One can recognise a Helicase C-terminal domain in the interval 631-790; it reads KLRVLMTLLE…DSEMRNKESS (160 aa).

The protein belongs to the SNF2/RAD54 helicase family. Interacts with RAD51 and DMC1.

It localises to the nucleus. It catalyses the reaction ATP + H2O = ADP + phosphate + H(+). Its function is as follows. Involved in the recombinational repair of double-strand breaks (DSB) in DNA during mitosis and meiosis. Has DNA dependent ATPase activity. Promotes D-loop (displacement loop) formation with RAD51 recombinase. Modifies the topology of double-stranded DNA during the D-loop reaction to facilitate the invasion of the homologous duplex molecule by the initiating single-stranded DNA substrate. Required for adaptation from G2/M checkpoint arrest induced by a double strand break, by participating in monitoring the extent of single-stranded DNA produced by resection of DNA ends. This role is distinct from its roles in recombination. Promotes colocalization of RAD51 and DMC1 during meiotic recombination. Involved in crossover interference. This chain is DNA repair and recombination protein RDH54 (RDH54), found in Saccharomyces cerevisiae (strain YJM789) (Baker's yeast).